The sequence spans 166 residues: Small ribosomal subunit protein uS4 (166 aa).

The region spanning 103–165 (RRLQTVVYKK…PTSPYFKKAQ (63 aa)) is the S4 RNA-binding domain.

This sequence belongs to the universal ribosomal protein uS4 family. Part of the 30S ribosomal subunit. Contacts protein S5. The interaction surface between S4 and S5 is involved in control of translational fidelity.

In terms of biological role, one of the primary rRNA binding proteins, it binds directly to 16S rRNA where it nucleates assembly of the body of the 30S subunit. With S5 and S12 plays an important role in translational accuracy. This Ignicoccus hospitalis (strain KIN4/I / DSM 18386 / JCM 14125) protein is Small ribosomal subunit protein uS4.